The sequence spans 522 residues: Protein nucleotidyltransferase YdiU (522 aa).

ATP is bound by residues glycine 109, glycine 111, arginine 112, lysine 132, aspartate 144, glycine 145, arginine 195, and arginine 202. Aspartate 271 serves as the catalytic Proton acceptor. Mg(2+) contacts are provided by asparagine 272 and aspartate 281. ATP is bound at residue aspartate 281.

The protein belongs to the SELO family. The cofactor is Mg(2+). Requires Mn(2+) as cofactor.

It carries out the reaction L-seryl-[protein] + ATP = 3-O-(5'-adenylyl)-L-seryl-[protein] + diphosphate. The enzyme catalyses L-threonyl-[protein] + ATP = 3-O-(5'-adenylyl)-L-threonyl-[protein] + diphosphate. The catalysed reaction is L-tyrosyl-[protein] + ATP = O-(5'-adenylyl)-L-tyrosyl-[protein] + diphosphate. It catalyses the reaction L-histidyl-[protein] + UTP = N(tele)-(5'-uridylyl)-L-histidyl-[protein] + diphosphate. It carries out the reaction L-seryl-[protein] + UTP = O-(5'-uridylyl)-L-seryl-[protein] + diphosphate. The enzyme catalyses L-tyrosyl-[protein] + UTP = O-(5'-uridylyl)-L-tyrosyl-[protein] + diphosphate. Its function is as follows. Nucleotidyltransferase involved in the post-translational modification of proteins. It can catalyze the addition of adenosine monophosphate (AMP) or uridine monophosphate (UMP) to a protein, resulting in modifications known as AMPylation and UMPylation. The polypeptide is Protein nucleotidyltransferase YdiU (Burkholderia lata (strain ATCC 17760 / DSM 23089 / LMG 22485 / NCIMB 9086 / R18194 / 383)).